The following is a 938-amino-acid chain: Isoleucine--tRNA ligase (938 aa).

Positions 58-68 match the 'HIGH' region motif; it reads PYANGSIHIGH. Lysine 183 is subject to N6-acetyllysine. Glutamate 561 serves as a coordination point for L-isoleucyl-5'-AMP. A 'KMSKS' region motif is present at residues 602-606; it reads KMSKS. Lysine 605 is an ATP binding site. Zn(2+) is bound by residues cysteine 901, cysteine 904, cysteine 921, and cysteine 924.

Belongs to the class-I aminoacyl-tRNA synthetase family. IleS type 1 subfamily. As to quaternary structure, monomer. Zn(2+) is required as a cofactor.

It localises to the cytoplasm. The enzyme catalyses tRNA(Ile) + L-isoleucine + ATP = L-isoleucyl-tRNA(Ile) + AMP + diphosphate. Its function is as follows. Catalyzes the attachment of isoleucine to tRNA(Ile). As IleRS can inadvertently accommodate and process structurally similar amino acids such as valine, to avoid such errors it has two additional distinct tRNA(Ile)-dependent editing activities. One activity is designated as 'pretransfer' editing and involves the hydrolysis of activated Val-AMP. The other activity is designated 'posttransfer' editing and involves deacylation of mischarged Val-tRNA(Ile). This is Isoleucine--tRNA ligase from Escherichia fergusonii (strain ATCC 35469 / DSM 13698 / CCUG 18766 / IAM 14443 / JCM 21226 / LMG 7866 / NBRC 102419 / NCTC 12128 / CDC 0568-73).